A 255-amino-acid polypeptide reads, in one-letter code: Bouquet formation protein 3 (255 aa).

8 helical membrane passes run 13–33 (IKVSIYLFLHTLTYGLLNYHL), 48–68 (IPYWMSYLSIIMHVGQSLLLQ), 72–94 (LGYGWLLLTKYPVYVLLSTYYLT), 99–116 (IAWAFIIDAISLLVARCF), 132–152 (YSVSFLFTIMASVLISVLNYI), 172–192 (SLVAPPLPLQYLAHVPIGYVI), 205–225 (SLFLMIFLTLWNCFIPYSILF), and 235–255 (VVGAYLSQIWIITFICWALSL).

The protein resides in the endoplasmic reticulum membrane. It localises to the nucleus inner membrane. Connects telomeres to the nuclear envelop (NE) during both vegetative growth and meiosis. This connection ensures clustering of telomeres to the spindle pole body (SPB) when cells enter meiotic prophase. The chain is Bouquet formation protein 3 (bqt3) from Schizosaccharomyces pombe (strain 972 / ATCC 24843) (Fission yeast).